The chain runs to 309 residues: Sulfur oxygenase/reductase (309 aa).

Residue cysteine 31 is modified to Cysteine persulfide. Positions 86, 90, and 114 each coordinate Fe cation.

As to quaternary structure, homoicosatetramer. The resulting structure is a hollow sphere where catalysis takes place in the inside cavity. The cofactor is Fe cation.

Its subcellular location is the cytoplasm. The enzyme catalyses 4 sulfur + O2 + 4 H2O = 2 hydrogen sulfide + 2 sulfite + 6 H(+). Its activity is regulated as follows. Inhibited by zinc. In terms of biological role, catalyzes the simultaneous oxidation and reduction of elemental sulfur in the presence of oxygen, with sulfite and hydrogen sulfide as products. This is Sulfur oxygenase/reductase (sor) from Acidianus ambivalens (Desulfurolobus ambivalens).